The sequence spans 295 residues: MEVKDTNCTSLGYGKPPWIFKGSALYQLHLVKAENARAFIPKECKLVEAFGYTLGGFFLASYDDSPAGIFDELVVIAGLVWNPPTSCAWAARVLVGSDEACLHGRKVVGLPSQVARFSKKITALPQKPESKSSSFLRRIGLRTSSNYKNHMDVEVTEIKKQTAMSICNINVNATASQQDSKGWMGPLIKMSLPNFSGRTKYNSDLLKYSCQIECRVRAVQPAKVSGPSESDADKENSSEDQSSNVESVSRVPRGTKRNFSISVMLSKPILALEFNHLKMRVEAPTTVTACSHDTT.

A disordered region spans residues 221 to 251; the sequence is PAKVSGPSESDADKENSSEDQSSNVESVSRV.

In terms of biological role, required for neoxanthin biosynthesis. Probably not involved directly in the enzymatic conversion of violaxanthin to neoxanthin. Is necessary but not sufficient for neoxanthin synthesis. Seems not required for abscisic acid (ABA) biosynthesis in response to drought stress. This is Protein NEOXANTHIN-DEFICIENT 1 from Solanum lycopersicum (Tomato).